Here is a 102-residue protein sequence, read N- to C-terminus: Co-chaperonin GroES (102 aa).

It belongs to the GroES chaperonin family. As to quaternary structure, heptamer of 7 subunits arranged in a ring. Interacts with the chaperonin GroEL.

It localises to the cytoplasm. In terms of biological role, together with the chaperonin GroEL, plays an essential role in assisting protein folding. The GroEL-GroES system forms a nano-cage that allows encapsulation of the non-native substrate proteins and provides a physical environment optimized to promote and accelerate protein folding. GroES binds to the apical surface of the GroEL ring, thereby capping the opening of the GroEL channel. This chain is Co-chaperonin GroES, found in Chlamydia muridarum (strain MoPn / Nigg).